Consider the following 619-residue polypeptide: 4-hydroxyphenylalkanoate adenylyltransferase (619 aa).

This sequence belongs to the ATP-dependent AMP-binding enzyme family.

The catalysed reaction is 17-(4-hydroxyphenyl)heptadecanoate + holo-[(phenol)carboxyphthiodiolenone synthase] + ATP = 17-(4-hydroxyphenyl)heptadecanoyl-[(phenol)carboxyphthiodiolenone synthase] + AMP + diphosphate. It carries out the reaction 19-(4-hydroxyphenyl)nonadecanoate + holo-[(phenol)carboxyphthiodiolenone synthase] + ATP = 19-(4-hydroxyphenyl)nonadecanoyl-[(phenol)carboxyphthiodiolenone synthase] + AMP + diphosphate. The enzyme catalyses dodecanoate + ATP + H(+) = dodecanoyl-AMP + diphosphate. The protein operates within lipid metabolism; fatty acid biosynthesis. Functionally, catalyzes the activation of long-chain fatty acids as acyl-adenylates (acyl-AMP), which are then transferred to the multifunctional polyketide synthase PpsA for further chain extension. Involved in the biosynthesis of phenolphthiocerol, which is an important intermediate in the biosynthesis of phenolic glycolipid (PGL), also called mycosid B. The protein is 4-hydroxyphenylalkanoate adenylyltransferase (fadD29) of Mycobacterium tuberculosis (strain ATCC 25618 / H37Rv).